The chain runs to 121 residues: C-X-C motif chemokine 11-6 (121 aa).

Positions 1 to 20 (MKTLAAFLLLSCLIAGEVNG) are cleaved as a signal peptide. Intrachain disulfides connect Cys-29/Cys-56 and Cys-31/Cys-73. A disordered region spans residues 95–121 (QSVPHSTTTGTVKSSMTSSTSAPTAFK). The segment covering 100–115 (STTTGTVKSSMTSSTS) has biased composition (low complexity).

The protein belongs to the intercrine alpha (chemokine CxC) family.

Its subcellular location is the secreted. Ligand for cxcr3.2. Chemotactic for macrophages. This is C-X-C motif chemokine 11-6 from Danio rerio (Zebrafish).